Here is a 516-residue protein sequence, read N- to C-terminus: Putative glucosylceramidase 2 (516 aa).

Residues 1 to 23 (MSIAWSCFVLGLFALASLQVALA) form the signal peptide. The Proton donor role is filled by glutamate 254. Catalysis depends on glutamate 358, which acts as the Nucleophile.

It belongs to the glycosyl hydrolase 30 family.

The enzyme catalyses a beta-D-glucosylceramide + H2O = an N-acyl-sphingoid base + D-glucose. It carries out the reaction a beta-D-glucosyl-(1&lt;-&gt;1')-N-acylsphing-4-enine + H2O = an N-acylsphing-4-enine + D-glucose. It catalyses the reaction an N-acyl-1-beta-D-glucosyl-15-methylhexadecasphing-4-enine + H2O = an N-acyl-15-methylhexadecasphing-4-enine + D-glucose. It participates in lipid metabolism; sphingolipid metabolism. Glucosylceramidase that catalyzes the hydrolysis of glucosylceramides into free ceramides and glucose. C.elegans contain specific sphingoid bases, which are unique or different in structure compared to the sphingoid bases found in other animals. Two examples of these distinctive compounds are: 15-methylhexadecasphinganine and 15-methylhexadecasphing-4-enine. In Caenorhabditis elegans, this protein is Putative glucosylceramidase 2 (gba-2).